A 314-amino-acid chain; its full sequence is Putative 4-hydroxy-2-oxoglutarate aldolase, mitochondrial (314 aa).

50–51 (TN) contributes to the substrate binding site. Residue lysine 171 is the Schiff-base intermediate with substrate of the active site.

The protein belongs to the DapA family.

It catalyses the reaction (4S)-4-hydroxy-2-oxoglutarate = glyoxylate + pyruvate. The catalysed reaction is (4R)-4-hydroxy-2-oxoglutarate = glyoxylate + pyruvate. In terms of biological role, may catalyze the final step in the metabolic pathway of hydroxyproline. The protein is Putative 4-hydroxy-2-oxoglutarate aldolase, mitochondrial of Coccidioides immitis (strain RS) (Valley fever fungus).